The sequence spans 333 residues: MGDWGFLEKLLDQVQEHSTVVGKIWLTVLFIFRILILGLAGESVWGDEQSDFECNTAQPGCTNVCYDQAFPISHIRYWVLQFLFVSTPTLVYLGHVIYLSRREERLRQKEGELRALPAKDPRVERALASIERQMAKISVAEDGHLRIRGALMGTYVASVLCKSVLEAGFLYGQWRLYGWTMEPVFVCQRSPCPYLVDCFVSRPTEKTIFIIFMLVVGLISLVLNLLELAYLLCRCLSRGVRARQRQDAPPAPGTSSEPYADQVFFYLPMSEGPSSPPCPTYNGLSSSEQNWANLTTEERLASSRAPLFLDPPPQTGRKSPSRPSSSASKKQYV.

Residues 1–20 are Cytoplasmic-facing; that stretch reads MGDWGFLEKLLDQVQEHSTV. Residues 21–40 form a helical membrane-spanning segment; that stretch reads VGKIWLTVLFIFRILILGLA. At 41–76 the chain is on the extracellular side; sequence GESVWGDEQSDFECNTAQPGCTNVCYDQAFPISHIR. Residues 77-99 traverse the membrane as a helical segment; that stretch reads YWVLQFLFVSTPTLVYLGHVIYL. Over 100–148 the chain is Cytoplasmic; that stretch reads SRREERLRQKEGELRALPAKDPRVERALASIERQMAKISVAEDGHLRIR. A helical transmembrane segment spans residues 149–165; it reads GALMGTYVASVLCKSVL. The Extracellular segment spans residues 166 to 207; the sequence is EAGFLYGQWRLYGWTMEPVFVCQRSPCPYLVDCFVSRPTEKT. A helical transmembrane segment spans residues 208–230; sequence IFIIFMLVVGLISLVLNLLELAY. Residues 231 to 333 are Cytoplasmic-facing; sequence LLCRCLSRGV…SSSASKKQYV (103 aa). Residues 303-333 form a disordered region; that stretch reads SRAPLFLDPPPQTGRKSPSRPSSSASKKQYV. The segment covering 317 to 333 has biased composition (low complexity); it reads RKSPSRPSSSASKKQYV.

Belongs to the connexin family. Alpha-type (group II) subfamily. As to quaternary structure, a connexon is composed of a hexamer of connexins.

It localises to the cell membrane. It is found in the cell junction. The protein resides in the gap junction. In terms of biological role, one gap junction consists of a cluster of closely packed pairs of transmembrane channels, the connexons, through which materials of low MW diffuse from one cell to a neighboring cell. In Bos taurus (Bovine), this protein is Gap junction alpha-4 protein (GJA4).